The chain runs to 20 residues: Alpha-basrubrin (20 aa).

Basic and acidic residues predominate over residues 1-13 (GADFQECMKEHSQ). Residues 1–20 (GADFQECMKEHSQKQHQHQG) are disordered.

Possesses antifungal activity against B.cinerea, M.arachidicola and F.oxysporum but not C.comatus and R.solani. Inhibits HIV-1 reverse transcriptase and cell-free translation. In Basella alba (Malabar spinach), this protein is Alpha-basrubrin.